The primary structure comprises 299 residues: Junctional adhesion molecule A (299 aa).

The first 27 residues, 1–27 (MGTKAQVERKLLCLFILAILLCSLALG), serve as a signal peptide directing secretion. Ig-like V-type domains lie at 28-125 (SVTV…VKVK) and 135-228 (PTVN…NAVR). Topologically, residues 28-238 (SVTVHSSEPE…MEAVERNVGV (211 aa)) are extracellular. 2 disulfide bridges follow: Cys-50/Cys-109 and Cys-153/Cys-212. N-linked (GlcNAc...) asparagine glycosylation occurs at Asn-185. Residues 239-259 (IVAAVLVTLILLGILVFGIWF) form a helical membrane-spanning segment. Residues 260–299 (AYSRGHFDRTKKGTSSKKVIYSQPSARSEGEFKQTSSFLV) lie on the Cytoplasmic side of the membrane. Phosphoserine occurs at positions 281, 284, and 287.

It belongs to the immunoglobulin superfamily. Interacts with the ninth PDZ domain of MPDZ. Interacts with the first PDZ domain of PARD3. The association between PARD3 and PARD6B probably disrupts this interaction. Interacts with ITGAL (via I-domain). Interacts with CD151. In terms of assembly, (Microbial infection) Interacts with Mammalian reovirus sigma-1 capsid protein. As to quaternary structure, (Microbial infection) Interacts with Human Rotavirus strain Wa vp4 capsid protein. In terms of processing, N-glycosylated. (Microbial infection) Cleaved by H.pylori virulence factor PqqE. Cleavage leads to altered tight junction functions. Expressed in endothelium, epithelium and leukocytes (at protein level).

It localises to the cell junction. Its subcellular location is the tight junction. The protein resides in the cell membrane. Seems to play a role in epithelial tight junction formation. Appears early in primordial forms of cell junctions and recruits PARD3. The association of the PARD6-PARD3 complex may prevent the interaction of PARD3 with JAM1, thereby preventing tight junction assembly. Plays a role in regulating monocyte transmigration involved in integrity of epithelial barrier. Ligand for integrin alpha-L/beta-2 involved in memory T-cell and neutrophil transmigration. Involved in platelet activation. Functionally, (Microbial infection) Acts as a receptor for Mammalian reovirus sigma-1. Its function is as follows. (Microbial infection) Acts as a receptor for Human Rotavirus strain Wa. The protein is Junctional adhesion molecule A (F11R) of Homo sapiens (Human).